A 354-amino-acid polypeptide reads, in one-letter code: ORC1-type DNA replication protein 9 (354 aa).

Residues 63–67, tyrosine 195, and arginine 207 each bind ATP; that span reads TGKTC.

This sequence belongs to the CDC6/cdc18 family.

Involved in regulation of DNA replication. The protein is ORC1-type DNA replication protein 9 (orc9-1) of Halobacterium salinarum (strain ATCC 700922 / JCM 11081 / NRC-1) (Halobacterium halobium).